The sequence spans 195 residues: tRNA (pseudouridine(54)-N(1))-methyltransferase (195 aa).

Leu129 serves as a coordination point for S-adenosyl-L-methionine.

The protein belongs to the methyltransferase superfamily. TrmY family. Homodimer.

It localises to the cytoplasm. The enzyme catalyses pseudouridine(54) in tRNA + S-adenosyl-L-methionine = N(1)-methylpseudouridine(54) in tRNA + S-adenosyl-L-homocysteine + H(+). In terms of biological role, specifically catalyzes the N1-methylation of pseudouridine at position 54 (Psi54) in tRNAs. The polypeptide is tRNA (pseudouridine(54)-N(1))-methyltransferase (Methanocorpusculum labreanum (strain ATCC 43576 / DSM 4855 / Z)).